A 186-amino-acid chain; its full sequence is MRCPFCRHPDSRVVDSREAEEGAAIRRRRSCPACGRRFTTMEEASLRVRKRSGATEPFSRAKVIVGVRKACQGRPVRSDDLALLAERVEETVRSSGSAEVAAEDVGRAILGPLRELDEVAYLRFASVYLAFESLGDFEAAIAALRAESAGGGEPPVAGKPTTMPAATGASAVIVPVTTGPRAAAGP.

A zinc finger lies at C3–C34. The ATP-cone domain occupies L46–D136. Residues A149–A169 form a disordered region.

This sequence belongs to the NrdR family. It depends on Zn(2+) as a cofactor.

Functionally, negatively regulates transcription of bacterial ribonucleotide reductase nrd genes and operons by binding to NrdR-boxes. The protein is Transcriptional repressor NrdR of Parafrankia sp. (strain EAN1pec).